A 138-amino-acid chain; its full sequence is Putative pre-16S rRNA nuclease (138 aa).

The protein belongs to the YqgF nuclease family.

The protein localises to the cytoplasm. In terms of biological role, could be a nuclease involved in processing of the 5'-end of pre-16S rRNA. The chain is Putative pre-16S rRNA nuclease (yrrK) from Bacillus subtilis (strain 168).